Reading from the N-terminus, the 159-residue chain is Trafficking protein particle complex subunit 6A (159 aa).

At Ser-33 the chain carries Phosphoserine.

Belongs to the TRAPP small subunits family. BET3 subfamily. As to quaternary structure, part of the multisubunit transport protein particle (TRAPP) complex. Heterodimer with TRAPPC3. The heterodimer TRAPPC3-TRAPPC6A interacts with TRAPPC2L. Interacts with TRAPPC2L.

Its subcellular location is the golgi apparatus. The protein resides in the cis-Golgi network. The protein localises to the endoplasmic reticulum. Functionally, may play a role in vesicular transport during the biogenesis of melanosomes. The sequence is that of Trafficking protein particle complex subunit 6A from Homo sapiens (Human).